A 161-amino-acid chain; its full sequence is Prs ADP-ribosylating toxin (161 aa).

The protein belongs to the MbcT/ParT/Res family. Homodimer, forms heterotetrameric ParS(2)-ParT(2) complexes. In terms of processing, consumes NAD(+) and auto-ADP-ribosylates on the tryptic fragment Ala-47-Arg-66 in vitro. Also auto-ADP-ribosylates using NADP(+).

Functionally, toxic component of a type II toxin-antitoxin (TA) system. Expression in E.coli inhibits cell growth; bacteriostasis is neutralized by expression of cognate antitoxin ParS. ADP-ribosylates E.coli ribose-phosphate pyrophosphokinase (RPPK, prs) using NAD(+) in vitro; ADP-ribosylates RPPK on 'Lys-182' and 'Ser-202'. Cannot use NADP(+). Also auto-ADP-ribosylates in vitro; in the presence of RPPK auto-ADP-ribosylation decreases. This chain is Prs ADP-ribosylating toxin, found in Sphingobium sp. (strain YBL2).